Reading from the N-terminus, the 331-residue chain is UPF0194 membrane protein YbhG (331 aa).

Residues 1–19 form the signal peptide; it reads MKKPVVIGLAIAAIVAVIA. Residues 107 to 208 adopt a coiled-coil conformation; it reads EEIAQAAAAV…LDLQDTTLIA (102 aa).

This sequence belongs to the UPF0194 family.

The protein resides in the periplasm. The polypeptide is UPF0194 membrane protein YbhG (Salmonella paratyphi A (strain ATCC 9150 / SARB42)).